The following is a 198-amino-acid chain: Thymidylate kinase (198 aa).

10–17 contributes to the ATP binding site; that stretch reads GLDGSGKT.

The protein belongs to the thymidylate kinase family.

It carries out the reaction dTMP + ATP = dTDP + ADP. In terms of biological role, phosphorylation of dTMP to form dTDP in both de novo and salvage pathways of dTTP synthesis. This chain is Thymidylate kinase, found in Thermus thermophilus (strain ATCC BAA-163 / DSM 7039 / HB27).